Consider the following 29-residue polypeptide: Putative membrane protein PmrR (29 aa).

Residues valine 5–alanine 27 form a helical membrane-spanning segment.

It is found in the cell inner membrane. Its function is as follows. May bind to BasS and modulate its sensor kinase activity. This is Putative membrane protein PmrR (pmrR) from Escherichia coli (strain K12).